The primary structure comprises 146 residues: Leghemoglobin 49 (146 aa).

A Globin domain is found at 2-146 (GFTQQQEALV…LATAIKKAMS (145 aa)). A nitrated tyrosine mark is found at Tyr24 and Tyr29. Ser44 is a binding site for heme b. Position 44 is a phosphoserine (Ser44). His61 serves as a coordination point for O2. Heme b is bound by residues His93 and Lys96. Residue Tyr134 is modified to Nitrated tyrosine.

The protein belongs to the plant globin family. In terms of assembly, monomer. In terms of processing, nitrated in effective nodules and particularly in hypoxic conditions; this mechanism may play a protective role in the symbiosis by buffering toxic peroxynitrite NO(2)(-). Nitration level decrease during nodule senescence. Phosphorylation at Ser-44 disrupts the molecular environment of its porphyrin ring oxygen binding pocket, thus leading to a reduced oxygen consumption and to the delivery of oxygen O(2) to symbiosomes. In terms of tissue distribution, accumulates in root nodules after inoculation by bacteria of the genus Rhizobium.

It is found in the cytoplasm. Its subcellular location is the cytosol. The protein resides in the nucleus. Functionally, leghemoglobin that reversibly binds oxygen O(2) through a pentacoordinated heme iron. In root nodules, facilitates the diffusion of oxygen to the bacteroids while preventing the bacterial nitrogenase from being inactivated by buffering dioxygen, nitric oxide and carbon monoxide, and promoting the formation of reactive oxygen species (ROS, e.g. H(2)O(2)). This role is essential for symbiotic nitrogen fixation (SNF). In Vicia faba (Broad bean), this protein is Leghemoglobin 49.